We begin with the raw amino-acid sequence, 486 residues long: N-succinylglutamate 5-semialdehyde dehydrogenase (486 aa).

G220–G225 contacts NAD(+). Active-site residues include E243 and C277.

This sequence belongs to the aldehyde dehydrogenase family. AstD subfamily.

It catalyses the reaction N-succinyl-L-glutamate 5-semialdehyde + NAD(+) + H2O = N-succinyl-L-glutamate + NADH + 2 H(+). The protein operates within amino-acid degradation; L-arginine degradation via AST pathway; L-glutamate and succinate from L-arginine: step 4/5. In terms of biological role, catalyzes the NAD-dependent reduction of succinylglutamate semialdehyde into succinylglutamate. The polypeptide is N-succinylglutamate 5-semialdehyde dehydrogenase (Shewanella baltica (strain OS185)).